The following is a 284-amino-acid chain: 3-methyl-2-oxobutanoate hydroxymethyltransferase 2 (284 aa).

Positions 49 and 88 each coordinate Mg(2+). 3-methyl-2-oxobutanoate is bound by residues 49 to 50 (DS), D88, and K118. E120 provides a ligand contact to Mg(2+). E187 functions as the Proton acceptor in the catalytic mechanism.

The protein belongs to the PanB family. As to quaternary structure, homodecamer; pentamer of dimers. Mg(2+) is required as a cofactor.

Its subcellular location is the cytoplasm. The catalysed reaction is 3-methyl-2-oxobutanoate + (6R)-5,10-methylene-5,6,7,8-tetrahydrofolate + H2O = 2-dehydropantoate + (6S)-5,6,7,8-tetrahydrofolate. It participates in cofactor biosynthesis; (R)-pantothenate biosynthesis; (R)-pantoate from 3-methyl-2-oxobutanoate: step 1/2. Catalyzes the reversible reaction in which hydroxymethyl group from 5,10-methylenetetrahydrofolate is transferred onto alpha-ketoisovalerate to form ketopantoate. This is 3-methyl-2-oxobutanoate hydroxymethyltransferase 2 from Burkholderia cenocepacia (strain HI2424).